Here is a 598-residue protein sequence, read N- to C-terminus: Glutamine--fructose-6-phosphate aminotransferase [isomerizing] (598 aa).

Cysteine 2 acts as the Nucleophile; for GATase activity in catalysis. One can recognise a Glutamine amidotransferase type-2 domain in the interval 2–218; the sequence is CGIVGYIGNN…DLSLGYASKD (217 aa). 2 consecutive SIS domains span residues 277–421 and 450–588; these read VFDE…KRNL and LSKR…VDMP. The For Fru-6P isomerization activity role is filled by lysine 593.

In terms of assembly, homodimer.

Its subcellular location is the cytoplasm. It carries out the reaction D-fructose 6-phosphate + L-glutamine = D-glucosamine 6-phosphate + L-glutamate. Catalyzes the first step in hexosamine metabolism, converting fructose-6P into glucosamine-6P using glutamine as a nitrogen source. In Campylobacter jejuni subsp. jejuni serotype O:2 (strain ATCC 700819 / NCTC 11168), this protein is Glutamine--fructose-6-phosphate aminotransferase [isomerizing].